We begin with the raw amino-acid sequence, 111 residues long: MSELLRARSQSSERGNDQESSQPVGSVIVQEPTEEKRQEEEPPTDNQGIAPSGEIENQAVPAFQGPDMEAFQQELALLKIEDEPGDGPDVREGIMPTFDLTKVLEAGDAQP.

The tract at residues 1-66 (MSELLRARSQ…NQAVPAFQGP (66 aa)) is disordered. Polar residues predominate over residues 8 to 24 (RSQSSERGNDQESSQPV).

This sequence belongs to the GAGE family.

In Homo sapiens (Human), this protein is P antigen family member 2 (PAGE2).